A 365-amino-acid chain; its full sequence is Eukaryotic translation initiation factor 3 subunit H (365 aa).

An MPN domain is found at 11-160 (VKVEALVVMK…LRAFRLSPKF (150 aa)).

The protein belongs to the eIF-3 subunit H family. In terms of assembly, component of the eukaryotic translation initiation factor 3 (eIF-3) complex.

The protein localises to the cytoplasm. Its function is as follows. Component of the eukaryotic translation initiation factor 3 (eIF-3) complex, which is involved in protein synthesis of a specialized repertoire of mRNAs and, together with other initiation factors, stimulates binding of mRNA and methionyl-tRNAi to the 40S ribosome. The eIF-3 complex specifically targets and initiates translation of a subset of mRNAs involved in cell proliferation. The polypeptide is Eukaryotic translation initiation factor 3 subunit H (Aspergillus clavatus (strain ATCC 1007 / CBS 513.65 / DSM 816 / NCTC 3887 / NRRL 1 / QM 1276 / 107)).